The chain runs to 905 residues: Alanine--tRNA ligase (905 aa).

The Zn(2+) site is built by histidine 595, histidine 599, cysteine 696, and histidine 700.

Belongs to the class-II aminoacyl-tRNA synthetase family. It depends on Zn(2+) as a cofactor.

The protein localises to the cytoplasm. The enzyme catalyses tRNA(Ala) + L-alanine + ATP = L-alanyl-tRNA(Ala) + AMP + diphosphate. In terms of biological role, catalyzes the attachment of alanine to tRNA(Ala) in a two-step reaction: alanine is first activated by ATP to form Ala-AMP and then transferred to the acceptor end of tRNA(Ala). Also edits incorrectly charged Ser-tRNA(Ala) and Gly-tRNA(Ala) via its editing domain. The sequence is that of Alanine--tRNA ligase from Anaeromyxobacter dehalogenans (strain 2CP-C).